Consider the following 252-residue polypeptide: MFYDFVPQSRFLLGTAGYPSPQILQQAIEASGSEIITVSLRREGSQGGAFRALLTQLNKRVLPNTAGCHTVKEAVTTAYMARELFNTRWIKLEVIGHADTLQPDPFALVEAARILCADGFQVFPYTTEDLILGEKLLEAGCKLLMPWGAPIGSGQGLRNIEGLRSMRSWFKDIPLIIDAGIGAPSQAAQAMEMGFDGILLNTAVARAQDPLGMAQAFASAIRAGYDARSAGLIERRDMATASTPIFGMAQFS.

Lysine 91 (schiff-base intermediate with DXP) is an active-site residue. Residues glycine 152, 179–180, and 201–202 contribute to the 1-deoxy-D-xylulose 5-phosphate site; these read AG and NT.

Belongs to the ThiG family. In terms of assembly, homotetramer. Forms heterodimers with either ThiH or ThiS.

The protein localises to the cytoplasm. It catalyses the reaction [ThiS sulfur-carrier protein]-C-terminal-Gly-aminoethanethioate + 2-iminoacetate + 1-deoxy-D-xylulose 5-phosphate = [ThiS sulfur-carrier protein]-C-terminal Gly-Gly + 2-[(2R,5Z)-2-carboxy-4-methylthiazol-5(2H)-ylidene]ethyl phosphate + 2 H2O + H(+). Its pathway is cofactor biosynthesis; thiamine diphosphate biosynthesis. Functionally, catalyzes the rearrangement of 1-deoxy-D-xylulose 5-phosphate (DXP) to produce the thiazole phosphate moiety of thiamine. Sulfur is provided by the thiocarboxylate moiety of the carrier protein ThiS. In vitro, sulfur can be provided by H(2)S. In Erwinia amylovora (Fire blight bacteria), this protein is Thiazole synthase.